Consider the following 197-residue polypeptide: FMN-dependent NADH:quinone oxidoreductase (197 aa).

FMN contacts are provided by residues S10, 16–18 (SKS), and 96–99 (MYNF).

This sequence belongs to the azoreductase type 1 family. As to quaternary structure, homodimer. FMN is required as a cofactor.

The enzyme catalyses 2 a quinone + NADH + H(+) = 2 a 1,4-benzosemiquinone + NAD(+). The catalysed reaction is N,N-dimethyl-1,4-phenylenediamine + anthranilate + 2 NAD(+) = 2-(4-dimethylaminophenyl)diazenylbenzoate + 2 NADH + 2 H(+). Functionally, quinone reductase that provides resistance to thiol-specific stress caused by electrophilic quinones. In terms of biological role, also exhibits azoreductase activity. Catalyzes the reductive cleavage of the azo bond in aromatic azo compounds to the corresponding amines. This is FMN-dependent NADH:quinone oxidoreductase from Marinomonas sp. (strain MWYL1).